A 127-amino-acid chain; its full sequence is Small ribosomal subunit protein uS12m (127 aa).

It belongs to the universal ribosomal protein uS12 family.

It is found in the mitochondrion. This chain is Small ribosomal subunit protein uS12m (RPS12), found in Acanthamoeba castellanii (Amoeba).